Reading from the N-terminus, the 235-residue chain is Orotidine 5'-phosphate decarboxylase (235 aa).

Residues Asp9, Lys31, 58 to 67, Thr121, Arg180, Gln190, Gly210, and Arg211 contribute to the substrate site; that span reads DLKFHDIPNT. The Proton donor role is filled by Lys60.

This sequence belongs to the OMP decarboxylase family. Type 1 subfamily. Homodimer.

It carries out the reaction orotidine 5'-phosphate + H(+) = UMP + CO2. The protein operates within pyrimidine metabolism; UMP biosynthesis via de novo pathway; UMP from orotate: step 2/2. Its function is as follows. Catalyzes the decarboxylation of orotidine 5'-monophosphate (OMP) to uridine 5'-monophosphate (UMP). This is Orotidine 5'-phosphate decarboxylase from Nitratidesulfovibrio vulgaris (strain ATCC 29579 / DSM 644 / CCUG 34227 / NCIMB 8303 / VKM B-1760 / Hildenborough) (Desulfovibrio vulgaris).